A 354-amino-acid chain; its full sequence is Trans-enoyl reductase pydC (354 aa).

The region spanning 16–342 (ANTDPVTFEI…RREVSGEKIV (327 aa)) is the Enoyl reductase (ER) domain. Residues 51–54 (CDYK), 180–183 (SPKN), Tyr-198, 245–246 (FE), and 336–337 (VS) contribute to the NADP(+) site.

Belongs to the zinc-containing alcohol dehydrogenase family. As to quaternary structure, monomer.

It functions in the pathway mycotoxin biosynthesis. Functionally, trans-enoyl reductase; part of the gene cluster that mediates the biosynthesis of pyrrocidines, fungal natural products containing a macrocyclic para-cyclophane connected to a decahydrofluorene ring system that show potent antibiotic activities toward Gram-negative bacteria. Within the pathway, the PKS-NRPS pydA, with the help of the trans-enoyl reductase pydC, synthesize the polyketide-tyrosyl acyl thioester product which can be reductively off-loaded by the terminal reductase (R) domain in pydA. The PKS module of pydA acts in combination with the trans-acting enoyl reductase pydC to produce a methylated polyketide attached to the ACP domain. In parallel, the adenylation (A) domain of the NRPS module activated L-tyrosine, which is then transferred to the ACP domain. The condensation (C) domain subsequently link this group to the polyketide chain, forming an enzyme-bound amide. The alpha/beta hydrolase pydG is then required to catalyze the subsequent Knoevenagel condensation that affords the 3-pyrrolin-2-one ring, whereas the four proteins pydB, pydE, pydX and pydZ then function synergistically to form the cyclophane. PydB and the membrane-bound pydX and pydZ are lipid-binding proteins that can sequester and mold the pdyG product into the inverse S-shape. Binding of the medium chain reductase pydE to the complex would trigger the cascade oxidative cyclization. PydY is involved in the Diels-Alder cycloaddition that forms the decahydrofluorene core. Additional non-enzymatic hydroxylation yields pyrrocidine A2 which can be further reduced into pyrrocidine B by an endogenous reductase. This Acremonium sp protein is Trans-enoyl reductase pydC.